A 326-amino-acid chain; its full sequence is Fos-related antigen 2 (326 aa).

An N-acetylmethionine modification is found at Met-1. The segment at 1-39 (MYQDYPGNFDTSSRGSSGSPAHAESYSSGGGGQQKFRVD) is disordered. The span at 9–19 (FDTSSRGSSGS) shows a compositional bias: polar residues. Lys-35 is covalently cross-linked (Glycyl lysine isopeptide (Lys-Gly) (interchain with G-Cter in SUMO2)). The residue at position 104 (Lys-104) is an N6-acetyllysine; alternate. Lys-104 participates in a covalent cross-link: Glycyl lysine isopeptide (Lys-Gly) (interchain with G-Cter in SUMO2); alternate. Disordered stretches follow at residues 111–131 (GRRR…RIRR), 193–244 (ISPE…QRSV), and 289–326 (EQES…LLAL). A Phosphoserine modification is found at Ser-120. The region spanning 124 to 187 (EEKRRIRRER…EKLEFMLVAH (64 aa)) is the bZIP domain. The segment at 126–128 (KRR) is basic motif. Residues 129–136 (IRRERNKL) are leucine-zipper. At Ser-200 the chain carries Phosphoserine. A compositionally biased stretch (polar residues) spans 201–211 (PPTSGLQSLRG). Lys-222 is covalently cross-linked (Glycyl lysine isopeptide (Lys-Gly) (interchain with G-Cter in SUMO2); alternate). Residue Lys-222 forms a Glycyl lysine isopeptide (Lys-Gly) (interchain with G-Cter in SUMO1); alternate linkage. A Phosphoserine modification is found at Ser-230. A Glycyl lysine isopeptide (Lys-Gly) (interchain with G-Cter in SUMO2) cross-link involves residue Lys-239. 2 positions are modified to phosphoserine: Ser-308 and Ser-320. Positions 308-320 (SSSGDQSSDSLNS) are enriched in low complexity.

Belongs to the bZIP family. Fos subfamily. As to quaternary structure, heterodimer. Interacts with the BAF multiprotein chromatin-remodeling complex subunits SMARCB1 and SMARCD1. Interacts with ARID1A and JUN. As to expression, expressed in the brain cortex. Expressed at night in pineal gland (at protein level). Also expressed in osteoblasts (at protein level).

Its subcellular location is the nucleus. In terms of biological role, controls osteoclast survival and size. As a dimer with JUN, activates LIF transcription. Activates CEBPB transcription in PGE2-activated osteoblasts. In Rattus norvegicus (Rat), this protein is Fos-related antigen 2 (Fosl2).